The chain runs to 246 residues: Probable transcriptional regulatory protein TM1040_1893 (246 aa).

Residues 1–21 (MAGHSKWANIQHRKGRQDAAR) are disordered.

It belongs to the TACO1 family.

The protein localises to the cytoplasm. The protein is Probable transcriptional regulatory protein TM1040_1893 of Ruegeria sp. (strain TM1040) (Silicibacter sp.).